The sequence spans 804 residues: Probable cadmium-transporting ATPase (804 aa).

2 HMA domains span residues Asp11–Ala74 and Asp89–Ile152. 4 residues coordinate Cd(2+): Cys22, Cys25, Cys100, and Cys103. 5 helical membrane-spanning segments follow: residues Ser183–Gly203, Leu207–Val227, Ile248–Ile268, Ile413–Trp433, and Leu441–Val461. The active-site 4-aspartylphosphate intermediate is the Asp492. Transmembrane regions (helical) follow at residues Leu749 to Ile771 and Thr776 to Leu798.

This sequence belongs to the cation transport ATPase (P-type) (TC 3.A.3) family. Type IB subfamily.

It is found in the cell membrane. It carries out the reaction Cd(2+)(in) + ATP + H2O = Cd(2+)(out) + ADP + phosphate + H(+). Couples the hydrolysis of ATP with the export of cadmium. Involved in cadmium resistance. The polypeptide is Probable cadmium-transporting ATPase (cadA) (Staphylococcus aureus).